Here is a 275-residue protein sequence, read N- to C-terminus: T-cell ecto-ADP-ribosyltransferase 2 (275 aa).

Positions 1–20 (MPSNICKFFLTWWLIQQVTG) are cleaved as a signal peptide. Intrachain disulfides connect cysteine 41–cysteine 243 and cysteine 141–cysteine 193. The region spanning 61–238 (AKLKVAWEEA…IFLDSPKRKK (178 aa)) is the TR mART core domain. NAD(+) is bound by residues tyrosine 98, arginine 146, and glutamine 164. Arginine 146 is an active-site residue. Serine 167 is an active-site residue. Residue serine 202 participates in NAD(+) binding. The residue at position 204 (arginine 204) is an ADP-ribosylarginine; by autocatalysis. The active site involves glutamate 209. The GPI-anchor amidated serine moiety is linked to residue serine 246. Residues 247 to 275 (SAGARESCVSLFLVVLPSLLVQLLCLAEP) constitute a propeptide, removed in mature form.

The protein belongs to the Arg-specific ADP-ribosyltransferase family. In terms of tissue distribution, postthymic T-cells.

Its subcellular location is the cell membrane. It carries out the reaction L-arginyl-[protein] + NAD(+) = N(omega)-(ADP-D-ribosyl)-L-arginyl-[protein] + nicotinamide + H(+). The catalysed reaction is NAD(+) + H2O = ADP-D-ribose + nicotinamide + H(+). Its function is as follows. Has both NAD(+) glycohydrolase and ADP-ribosyltransferase activity (to a lesser extent). The chain is T-cell ecto-ADP-ribosyltransferase 2 (Art2b) from Rattus norvegicus (Rat).